The following is a 938-amino-acid chain: Mediator of RNA polymerase II transcription subunit 16 (938 aa).

Belongs to the Mediator complex subunit 16 family. In terms of assembly, component of the Mediator complex.

Its subcellular location is the nucleus. Its function is as follows. Component of the Mediator complex, a coactivator involved in the regulated transcription of nearly all RNA polymerase II-dependent genes. Mediator functions as a bridge to convey information from gene-specific regulatory proteins to the basal RNA polymerase II transcription machinery. Mediator is recruited to promoters by direct interactions with regulatory proteins and serves as a scaffold for the assembly of a functional preinitiation complex with RNA polymerase II and the general transcription factors. This Eremothecium gossypii (strain ATCC 10895 / CBS 109.51 / FGSC 9923 / NRRL Y-1056) (Yeast) protein is Mediator of RNA polymerase II transcription subunit 16 (SIN4).